The sequence spans 440 residues: 3-phosphoshikimate 1-carboxyvinyltransferase (440 aa).

3 residues coordinate 3-phosphoshikimate: Lys-19, Ser-20, and Arg-24. Lys-19 serves as a coordination point for phosphoenolpyruvate. Phosphoenolpyruvate-binding residues include Gly-92 and Arg-121. The 3-phosphoshikimate site is built by Ser-166, Gln-168, Asp-315, and Lys-342. Position 168 (Gln-168) interacts with phosphoenolpyruvate. Residue Asp-315 is the Proton acceptor of the active site. 2 residues coordinate phosphoenolpyruvate: Arg-346 and Arg-399.

The protein belongs to the EPSP synthase family. As to quaternary structure, monomer.

Its subcellular location is the cytoplasm. The catalysed reaction is 3-phosphoshikimate + phosphoenolpyruvate = 5-O-(1-carboxyvinyl)-3-phosphoshikimate + phosphate. The protein operates within metabolic intermediate biosynthesis; chorismate biosynthesis; chorismate from D-erythrose 4-phosphate and phosphoenolpyruvate: step 6/7. Its function is as follows. Catalyzes the transfer of the enolpyruvyl moiety of phosphoenolpyruvate (PEP) to the 5-hydroxyl of shikimate-3-phosphate (S3P) to produce enolpyruvyl shikimate-3-phosphate and inorganic phosphate. This Leptospira interrogans serogroup Icterohaemorrhagiae serovar copenhageni (strain Fiocruz L1-130) protein is 3-phosphoshikimate 1-carboxyvinyltransferase.